The primary structure comprises 191 residues: NADH-quinone oxidoreductase subunit B (191 aa).

4 residues coordinate [4Fe-4S] cluster: Cys-70, Cys-71, Cys-135, and Cys-165.

It belongs to the complex I 20 kDa subunit family. As to quaternary structure, NDH-1 is composed of 14 different subunits. Subunits NuoB, C, D, E, F, and G constitute the peripheral sector of the complex. [4Fe-4S] cluster is required as a cofactor.

Its subcellular location is the cell inner membrane. It catalyses the reaction a quinone + NADH + 5 H(+)(in) = a quinol + NAD(+) + 4 H(+)(out). NDH-1 shuttles electrons from NADH, via FMN and iron-sulfur (Fe-S) centers, to quinones in the respiratory chain. The immediate electron acceptor for the enzyme in this species is believed to be ubiquinone. Couples the redox reaction to proton translocation (for every two electrons transferred, four hydrogen ions are translocated across the cytoplasmic membrane), and thus conserves the redox energy in a proton gradient. In Parvibaculum lavamentivorans (strain DS-1 / DSM 13023 / NCIMB 13966), this protein is NADH-quinone oxidoreductase subunit B.